The chain runs to 321 residues: MIFSTLEHILTHISFSVVSIVITIHLITLLVDEIIGLYDSLEKGMMTTFFCITGLLMTRWIYLRYLPLSNLYESLIFLSWSFSIIHMVPYFKKYKNYLKAITAPSAIFTQGFATSGLLTEMHQSEILVPALQSHWLMMHVSMMVLGYAALLCGSLLSLALLVITFRKFISIFSKSNNFVNESFSLGEIQYVREKNNLLPNTSFLSSRNYYRFQLIQQLDLWSYRIISLGFIFLTIGILSGAVWANEAWGSYWNWDPKETWAFITWTLFSIYLHTRTNKNFESVNSAIVASMGFLIIWICYFGVNLLGIGLHSYGSFTLTSN.

The next 8 membrane-spanning stretches (helical) occupy residues 17-37 (VVSI…IIGL), 46-63 (MTTF…WIYL), 71-91 (LYES…VPYF), 98-118 (LKAI…SGLL), 143-163 (MVLG…LLVI), 225-245 (IISL…VWAN), 259-273 (TWAF…IYLH), and 286-306 (AIVA…VNLL).

It belongs to the CcmF/CycK/Ccl1/NrfE/CcsA family. As to quaternary structure, may interact with Ccs1.

The protein resides in the plastid. The protein localises to the chloroplast thylakoid membrane. Its function is as follows. Required during biogenesis of c-type cytochromes (cytochrome c6 and cytochrome f) at the step of heme attachment. The chain is Cytochrome c biogenesis protein CcsA from Morus indica (Mulberry).